The following is a 71-amino-acid chain: UPF0346 protein BCE_2336 (71 aa).

This sequence belongs to the UPF0346 family.

The polypeptide is UPF0346 protein BCE_2336 (Bacillus cereus (strain ATCC 10987 / NRS 248)).